Here is a 672-residue protein sequence, read N- to C-terminus: Cytadherence high molecular weight protein 3 (672 aa).

25 repeat units span residues 98 to 100 (YDQ), 106 to 108 (YDQ), 160 to 162 (PVV), 197 to 199 (YDQ), 206 to 208 (YDQ), 211 to 213 (YDQ), 221 to 223 (YDQ), 226 to 228 (YDQ), 235 to 237 (YDQ), 249 to 251 (YDQ), 288 to 290 (PVV), 310 to 319 (VEPTPTPVVE), 312 to 315 (PTPT), 316 to 318 (PVV), 322 to 324 (PVV), 330 to 339 (VEPTPTPVVE), 332 to 335 (PTPT), 336 to 338 (PVV), 354 to 358 (PQPTP), 385 to 389 (PTPVP), 396 to 400 (PQPTP), 402 to 404 (PVV), 413 to 415 (PVV), 424 to 428 (PTPAP), and 454 to 456 (PVV). The tract at residues 98 to 251 (YDQVNNTFYD…NAYNTQNYDQ (154 aa)) is 9 X 3 AA repeats OF Y-D-Q. The tract at residues 160-456 (PVVDPDATPE…QTTPAVPPVV (297 aa)) is 8 X 3 AA repeats of P-V-V. The tract at residues 177–197 (GLDPLPQAPDEYQDTTAPPAY) is disordered. Positions 310 to 339 (VEPTPTPVVETAPVVEAPKVVEPTPTPVVE) are 2 X 10 AA repeats of V-E-P-T-P-T-P-V-V-E. Residues 312–428 (PTPTPVVETA…PKVVTPTPAP (117 aa)) are 6 X 5 AA repeats of P-X-P-X-P.

Its subcellular location is the cell projection. It is found in the attachment organelle membrane. In terms of biological role, component of the cytoskeleton-like structure which stabilizes the shape of the wall-less mycoplasma. This cytoskeleton-like network of accessory proteins containing HMW proteins 1 to 5 allows the proper anchoring of cytadhesin proteins in the mycoplasmal membrane at the attachment organelle. Essential for successful surface parasitism. This is Cytadherence high molecular weight protein 3 (hmw3) from Mycoplasma pneumoniae (strain ATCC 29342 / M129 / Subtype 1) (Mycoplasmoides pneumoniae).